We begin with the raw amino-acid sequence, 35 residues long: Cecropin (35 aa).

At isoleucine 35 the chain carries Isoleucine amide.

This sequence belongs to the cecropin family.

It localises to the secreted. In terms of biological role, cecropins have lytic and antibacterial activity against several Gram-positive and Gram-negative bacteria. The polypeptide is Cecropin (Bombyx mori (Silk moth)).